Reading from the N-terminus, the 261-residue chain is Pyridoxine-5'-phosphate oxidase (261 aa).

Arg42 to Arg45 contacts pyridoxal 5'-phosphate. Arg95–Leu98 serves as a coordination point for FMN. Lys100 lines the pyridoxal 5'-phosphate pocket. FMN is bound by residues Phe110–Thr111, Arg116–Lys117, and Gln139. Tyr157, Arg161, and Ser165 together coordinate pyridoxal 5'-phosphate. FMN contacts are provided by residues Gln174–Ser175 and Trp219. Pyridoxal 5'-phosphate is bound at residue Arg225–His227. FMN is bound at residue Arg229. Phosphothreonine is present on Thr238. Residue Ser241 is modified to Phosphoserine.

Belongs to the pyridoxamine 5'-phosphate oxidase family. As to quaternary structure, homodimer. Requires FMN as cofactor. As to expression, ubiquitous. Expressed in liver, brain, lung, prostate and stomach (at protein level).

The catalysed reaction is pyridoxine 5'-phosphate + O2 = pyridoxal 5'-phosphate + H2O2. It carries out the reaction pyridoxamine 5'-phosphate + O2 + H2O = pyridoxal 5'-phosphate + H2O2 + NH4(+). It participates in cofactor metabolism; pyridoxal 5'-phosphate salvage; pyridoxal 5'-phosphate from pyridoxamine 5'-phosphate: step 1/1. The protein operates within cofactor metabolism; pyridoxal 5'-phosphate salvage; pyridoxal 5'-phosphate from pyridoxine 5'-phosphate: step 1/1. In terms of biological role, catalyzes the oxidation of either pyridoxine 5'-phosphate (PNP) or pyridoxamine 5'-phosphate (PMP) into pyridoxal 5'-phosphate (PLP). In Homo sapiens (Human), this protein is Pyridoxine-5'-phosphate oxidase (PNPO).